The chain runs to 452 residues: tRNA-2-methylthio-N(6)-dimethylallyladenosine synthase (452 aa).

The MTTase N-terminal domain occupies Arg-5–Ala-121. Residues Cys-14, Cys-50, Cys-84, Cys-156, Cys-160, and Cys-163 each contribute to the [4Fe-4S] cluster site. The Radical SAM core domain occupies Arg-142–Asp-379. In terms of domain architecture, TRAM spans Gln-382–Ser-446.

This sequence belongs to the methylthiotransferase family. MiaB subfamily. As to quaternary structure, monomer. [4Fe-4S] cluster serves as cofactor.

The protein localises to the cytoplasm. The catalysed reaction is N(6)-dimethylallyladenosine(37) in tRNA + (sulfur carrier)-SH + AH2 + 2 S-adenosyl-L-methionine = 2-methylsulfanyl-N(6)-dimethylallyladenosine(37) in tRNA + (sulfur carrier)-H + 5'-deoxyadenosine + L-methionine + A + S-adenosyl-L-homocysteine + 2 H(+). Its function is as follows. Catalyzes the methylthiolation of N6-(dimethylallyl)adenosine (i(6)A), leading to the formation of 2-methylthio-N6-(dimethylallyl)adenosine (ms(2)i(6)A) at position 37 in tRNAs that read codons beginning with uridine. In Synechococcus elongatus (strain ATCC 33912 / PCC 7942 / FACHB-805) (Anacystis nidulans R2), this protein is tRNA-2-methylthio-N(6)-dimethylallyladenosine synthase.